The following is a 374-amino-acid chain: DNA replication and repair protein RecF (374 aa).

G30–T37 serves as a coordination point for ATP.

The protein belongs to the RecF family.

It is found in the cytoplasm. Its function is as follows. The RecF protein is involved in DNA metabolism; it is required for DNA replication and normal SOS inducibility. RecF binds preferentially to single-stranded, linear DNA. It also seems to bind ATP. This is DNA replication and repair protein RecF from Limosilactobacillus reuteri (strain DSM 20016) (Lactobacillus reuteri).